A 501-amino-acid polypeptide reads, in one-letter code: 5-beta-cholestane-3-alpha,7-alpha-diol 12-alpha-hydroxylase (501 aa).

Residues 1–21 (MVLWGPVLGVLLVAIVGYLCL) form a helical membrane-spanning segment. Serine 326 is subject to Phosphoserine. Residue cysteine 440 participates in heme binding.

This sequence belongs to the cytochrome P450 family. Heme is required as a cofactor.

The protein localises to the endoplasmic reticulum membrane. It is found in the microsome membrane. The catalysed reaction is 7alpha-hydroxycholest-4-en-3-one + reduced [NADPH--hemoprotein reductase] + O2 = 7alpha,12alpha-dihydroxycholest-4-en-3-one + oxidized [NADPH--hemoprotein reductase] + H2O + H(+). It catalyses the reaction 5beta-cholestane-3alpha,7alpha-diol + reduced [NADPH--hemoprotein reductase] + O2 = 5beta-cholestane-3alpha,7alpha,12alpha-triol + oxidized [NADPH--hemoprotein reductase] + H2O + H(+). It carries out the reaction chenodeoxycholate + reduced [NADPH--hemoprotein reductase] + O2 = cholate + oxidized [NADPH--hemoprotein reductase] + H2O + H(+). It functions in the pathway lipid metabolism; bile acid biosynthesis. In terms of biological role, a cytochrome P450 monooxygenase involved in primary bile acid biosynthesis. Catalyzes the 12alpha-hydroxylation of 7alpha-hydroxy-4-cholesten-3-one, an intermediate metabolite in cholic acid biosynthesis. Controls biliary balance of cholic acid and chenodeoxycholic acid, ultimately regulating the intestinal absorption of dietary lipids. Mechanistically, uses molecular oxygen inserting one oxygen atom into a substrate, and reducing the second into a water molecule, with two electrons provided by NADPH via cytochrome P450 reductase (CPR; NADPH--hemoprotein reductase). In Sus scrofa (Pig), this protein is 5-beta-cholestane-3-alpha,7-alpha-diol 12-alpha-hydroxylase (CYP8B1).